Here is a 316-residue protein sequence, read N- to C-terminus: Fe-S cluster assembly protein dre2 (316 aa).

Positions 1–128 (MAPRCLLIGT…KPEQEEPVSI (128 aa)) are N-terminal SAM-like domain. The tract at residues 129–208 (PLKFGKNKAN…EDDLITEADM (80 aa)) is linker. A disordered region spans residues 141–177 (SATNGTNGAVNPDGSVPLNLNRKRDQPEPVKPAGVGF). Residues C218, C229, C232, and C234 each contribute to the [2Fe-2S] cluster site. Residues 218-234 (CQPKPGKRRRACKDCTC) form a fe-S binding site A region. [4Fe-4S] cluster contacts are provided by C279, C282, C290, and C293. 2 consecutive short sequence motifs (cx2C motif) follow at residues 279-282 (CGNC) and 290-293 (CDGC). The tract at residues 279–293 (CGNCALGDAFRCDGC) is fe-S binding site B.

The protein belongs to the anamorsin family. Monomer. Interacts with TAH18. Interacts with MIA40. [2Fe-2S] cluster is required as a cofactor. [4Fe-4S] cluster serves as cofactor.

It is found in the cytoplasm. Its subcellular location is the mitochondrion intermembrane space. Its function is as follows. Component of the cytosolic iron-sulfur (Fe-S) protein assembly (CIA) machinery required for the maturation of extramitochondrial Fe-S proteins. Part of an electron transfer chain functioning in an early step of cytosolic Fe-S biogenesis, facilitating the de novo assembly of a [4Fe-4S] cluster on the scaffold complex CFD1-NBP35. Electrons are transferred to DRE2 from NADPH via the FAD- and FMN-containing protein TAH18. TAH18-DRE2 are also required for the assembly of the diferric tyrosyl radical cofactor of ribonucleotide reductase (RNR), probably by providing electrons for reduction during radical cofactor maturation in the catalytic small subunit RNR2. The chain is Fe-S cluster assembly protein dre2 from Pyrenophora tritici-repentis (strain Pt-1C-BFP) (Wheat tan spot fungus).